Here is a 175-residue protein sequence, read N- to C-terminus: ATP synthase subunit b, chloroplastic (175 aa).

Residues 26 to 44 (VINLAVVIGVVVSFVGDAV) form a helical membrane-spanning segment.

It belongs to the ATPase B chain family. In terms of assembly, F-type ATPases have 2 components, F(1) - the catalytic core - and F(0) - the membrane proton channel. F(1) has five subunits: alpha(3), beta(3), gamma(1), delta(1), epsilon(1). F(0) has four main subunits: a(1), b(1), b'(1) and c(10-14). The alpha and beta chains form an alternating ring which encloses part of the gamma chain. F(1) is attached to F(0) by a central stalk formed by the gamma and epsilon chains, while a peripheral stalk is formed by the delta, b and b' chains.

The protein resides in the plastid. It localises to the chloroplast thylakoid membrane. Its function is as follows. F(1)F(0) ATP synthase produces ATP from ADP in the presence of a proton or sodium gradient. F-type ATPases consist of two structural domains, F(1) containing the extramembraneous catalytic core and F(0) containing the membrane proton channel, linked together by a central stalk and a peripheral stalk. During catalysis, ATP synthesis in the catalytic domain of F(1) is coupled via a rotary mechanism of the central stalk subunits to proton translocation. Component of the F(0) channel, it forms part of the peripheral stalk, linking F(1) to F(0). In Tupiella akineta (Green alga), this protein is ATP synthase subunit b, chloroplastic.